The chain runs to 832 residues: Vacuolar transmembrane transporter penV (832 aa).

A run of 2 helical transmembrane segments spans residues 39 to 59 (LYTQFVISTALGLSAFLAFCI) and 117 to 137 (FFKFAIRFLLAVFIFAVAIIL). The disordered stretch occupies residues 152–171 (WDNPPGNKTTSPIDGSEKEK). A glycan (N-linked (GlcNAc...) asparagine) is linked at asparagine 158. Residues 178–198 (YLWIYVLFAYVFSGLAIYMLL) traverse the membrane as a helical segment. Asparagine 214 is a glycosylation site (N-linked (GlcNAc...) asparagine). The interval 291-322 (NDGNALPLTEQQPRDADDERSGLLSGHDNEHV) is disordered. Basic and acidic residues predominate over residues 302–321 (QPRDADDERSGLLSGHDNEH). 9 helical membrane passes run 434-454 (FVIGFLTVFWSVLLVPIASLL), 483-503 (GLPTLAFSLLTVAVPYLYEWL), 524-544 (FFFSFFNLFLLFTVFGTASGF), 560-582 (TIALALANSLEGLAPFYINLLIL), 587-608 (LFPFRLLEFGSVALYPFQFLSA), 623-645 (FSYGFSIPQTILILVICVVYSVF), 650-672 (LICLFGLIYFTVGKFIYKYQLLY), 687-707 (MICNRVFVGLLVHQLAMIGVL), and 713-733 (ITRSLLLVPLLGFTVWFSYWF). Positions 754–777 (PGGGDISPSPSSTLSPPSGLDRDS) are disordered. Positions 759–771 (ISPSPSSTLSPPS) are enriched in low complexity.

Belongs to the CSC1 (TC 1.A.17) family.

The protein localises to the vacuole membrane. Vacuolar transmembrane transporter that participates in the first stage of the beta-lactam biosynthesis (the formation of the ACV tripeptide), probably taking part in the supply of amino acids from the vacuolar lumen to the vacuole-anchored ACV synthetase. This chain is Vacuolar transmembrane transporter penV, found in Penicillium rubens (strain ATCC 28089 / DSM 1075 / NRRL 1951 / Wisconsin 54-1255) (Penicillium chrysogenum).